The chain runs to 578 residues: Septation ring formation regulator EzrA (578 aa).

At 1–8 (MKNNWIII) the chain is on the extracellular side. Residues 9–27 (LVLVIVIIAAVLYLIGYFM) form a helical membrane-spanning segment. Residues 28–578 (RKKNQEQLDE…NINNPNLTAI (551 aa)) are Cytoplasmic-facing. 3 coiled-coil regions span residues 103–165 (RFMK…DDKA), 256–285 (QNFA…AAVE), and 394–490 (KILD…DDLE).

It belongs to the EzrA family.

The protein resides in the cell membrane. In terms of biological role, negative regulator of FtsZ ring formation; modulates the frequency and position of FtsZ ring formation. Inhibits FtsZ ring formation at polar sites. Interacts either with FtsZ or with one of its binding partners to promote depolymerization. The protein is Septation ring formation regulator EzrA of Enterococcus faecalis (strain ATCC 700802 / V583).